A 142-amino-acid polypeptide reads, in one-letter code: uncharacterized protein (142 aa).

Residues methionine 1 to aspartate 120 form the N-acetyltransferase domain.

It belongs to the acetyltransferase family.

This is an uncharacterized protein from Streptococcus pyogenes serotype M3 (strain ATCC BAA-595 / MGAS315).